We begin with the raw amino-acid sequence, 344 residues long: Phosphoribosylformylglycinamidine cyclo-ligase (344 aa).

This sequence belongs to the AIR synthase family.

It localises to the cytoplasm. It catalyses the reaction 2-formamido-N(1)-(5-O-phospho-beta-D-ribosyl)acetamidine + ATP = 5-amino-1-(5-phospho-beta-D-ribosyl)imidazole + ADP + phosphate + H(+). The protein operates within purine metabolism; IMP biosynthesis via de novo pathway; 5-amino-1-(5-phospho-D-ribosyl)imidazole from N(2)-formyl-N(1)-(5-phospho-D-ribosyl)glycinamide: step 2/2. This Bifidobacterium animalis subsp. lactis (strain AD011) protein is Phosphoribosylformylglycinamidine cyclo-ligase.